The following is a 289-amino-acid chain: 4-hydroxy-tetrahydrodipicolinate synthase (289 aa).

Thr44 contributes to the pyruvate binding site. The Proton donor/acceptor role is filled by Tyr132. The active-site Schiff-base intermediate with substrate is the Lys161. A pyruvate-binding site is contributed by Ile201.

Belongs to the DapA family. In terms of assembly, homotetramer; dimer of dimers.

The protein localises to the cytoplasm. The catalysed reaction is L-aspartate 4-semialdehyde + pyruvate = (2S,4S)-4-hydroxy-2,3,4,5-tetrahydrodipicolinate + H2O + H(+). It participates in amino-acid biosynthesis; L-lysine biosynthesis via DAP pathway; (S)-tetrahydrodipicolinate from L-aspartate: step 3/4. Catalyzes the condensation of (S)-aspartate-beta-semialdehyde [(S)-ASA] and pyruvate to 4-hydroxy-tetrahydrodipicolinate (HTPA). The polypeptide is 4-hydroxy-tetrahydrodipicolinate synthase (Methanocaldococcus jannaschii (strain ATCC 43067 / DSM 2661 / JAL-1 / JCM 10045 / NBRC 100440) (Methanococcus jannaschii)).